The chain runs to 215 residues: Probable nicotinate-nucleotide adenylyltransferase (215 aa).

Belongs to the NadD family.

The catalysed reaction is nicotinate beta-D-ribonucleotide + ATP + H(+) = deamido-NAD(+) + diphosphate. It functions in the pathway cofactor biosynthesis; NAD(+) biosynthesis; deamido-NAD(+) from nicotinate D-ribonucleotide: step 1/1. Functionally, catalyzes the reversible adenylation of nicotinate mononucleotide (NaMN) to nicotinic acid adenine dinucleotide (NaAD). The sequence is that of Probable nicotinate-nucleotide adenylyltransferase from Coxiella burnetii (strain RSA 331 / Henzerling II).